The primary structure comprises 821 residues: Serine/threonine-protein kinase RAD53 (821 aa).

Ser-24 is subject to Phosphoserine. In terms of domain architecture, FHA 1 spans 66 to 116 (WTFGRNPACDYHLGNISRLSNKHFQILLGEDGNLLLNDISTNGTWLNGQKV). Phosphoserine is present on Ser-175. The region spanning 198–466 (SIIDEVVGQG…AAKALNHPWI (269 aa)) is the Protein kinase domain. ATP is bound by residues 204-212 (VGQGAFATV) and Lys-227. The active-site Proton acceptor is Asp-319. Phosphoserine occurs at positions 547 and 560. The FHA 2 domain occupies 601–664 (FFIGRSEDCN…NVSYLNNNRM (64 aa)). The segment at 735–770 (AAQRANQPSASSSSMSAKKPPVSDTNNNGNNSVLND) is disordered. A compositionally biased stretch (low complexity) spans 742-770 (PSASSSSMSAKKPPVSDTNNNGNNSVLND). A phosphoserine mark is found at Ser-774 and Ser-793. The segment at 791 to 821 (SLSQSQIDPSKKVKRAKLDQTSKGPENLQFS) is disordered. Over residues 809 to 821 (DQTSKGPENLQFS) the composition is skewed to polar residues.

It belongs to the protein kinase superfamily. CAMK Ser/Thr protein kinase family. CHEK2 subfamily. Interacts (via domain FHA 1) with PTC2 (when phosphorylated); the interaction is direct and serves to regulate DNA damage checkpoint signaling. Interacts with PIN4. In terms of processing, autophosphorylated. Phosphorylated in response to DNA double-strand breaks; dephosphorylation is mediated by PTC2 and PTC3.

It is found in the nucleus. It carries out the reaction L-seryl-[protein] + ATP = O-phospho-L-seryl-[protein] + ADP + H(+). The catalysed reaction is L-threonyl-[protein] + ATP = O-phospho-L-threonyl-[protein] + ADP + H(+). It catalyses the reaction L-tyrosyl-[protein] + ATP = O-phospho-L-tyrosyl-[protein] + ADP + H(+). Its activity is regulated as follows. Inactivated by dephosphorylation via recruitment of PTC2. Its function is as follows. Controls S-phase checkpoint as well as G1 and G2 DNA damage checkpoints. Phosphorylates proteins on serine, threonine, and tyrosine. Prevents entry into anaphase and mitotic exit after DNA damage via regulation of the Polo kinase CDC5. Seems to be involved in the phosphorylation of RPH1. This Saccharomyces cerevisiae (strain ATCC 204508 / S288c) (Baker's yeast) protein is Serine/threonine-protein kinase RAD53 (RAD53).